Reading from the N-terminus, the 522-residue chain is Lysine--tRNA ligase (522 aa).

The 'HIGH' region signature appears at 44 to 52; the sequence is PSGLPHIGT. A 'KMSKS' region motif is present at residues 290-294; that stretch reads KISKS. ATP is bound at residue lysine 293.

Belongs to the class-I aminoacyl-tRNA synthetase family.

It is found in the cytoplasm. The catalysed reaction is tRNA(Lys) + L-lysine + ATP = L-lysyl-tRNA(Lys) + AMP + diphosphate. In Rickettsia bellii (strain RML369-C), this protein is Lysine--tRNA ligase.